The chain runs to 473 residues: Siroheme synthase 2 (473 aa).

The precorrin-2 dehydrogenase /sirohydrochlorin ferrochelatase stretch occupies residues 1–204; sequence MDYFPIFCQL…NDHVQADQHV (204 aa). NAD(+) is bound by residues 22–23 and 43–44; these read EI and CE. Serine 128 is modified (phosphoserine). The uroporphyrinogen-III C-methyltransferase stretch occupies residues 216 to 473; that stretch reads GEVVLVGAGP…KVTECVAHVG (258 aa). Proline 225 is a binding site for S-adenosyl-L-methionine. Catalysis depends on aspartate 248, which acts as the Proton acceptor. Catalysis depends on lysine 270, which acts as the Proton donor. S-adenosyl-L-methionine is bound by residues 301–303, isoleucine 306, 331–332, methionine 382, and glycine 411; these read GGD and TA.

This sequence in the N-terminal section; belongs to the precorrin-2 dehydrogenase / sirohydrochlorin ferrochelatase family. The protein in the C-terminal section; belongs to the precorrin methyltransferase family.

It carries out the reaction uroporphyrinogen III + 2 S-adenosyl-L-methionine = precorrin-2 + 2 S-adenosyl-L-homocysteine + H(+). The catalysed reaction is precorrin-2 + NAD(+) = sirohydrochlorin + NADH + 2 H(+). It catalyses the reaction siroheme + 2 H(+) = sirohydrochlorin + Fe(2+). Its pathway is cofactor biosynthesis; adenosylcobalamin biosynthesis; precorrin-2 from uroporphyrinogen III: step 1/1. It functions in the pathway cofactor biosynthesis; adenosylcobalamin biosynthesis; sirohydrochlorin from precorrin-2: step 1/1. The protein operates within porphyrin-containing compound metabolism; siroheme biosynthesis; precorrin-2 from uroporphyrinogen III: step 1/1. It participates in porphyrin-containing compound metabolism; siroheme biosynthesis; siroheme from sirohydrochlorin: step 1/1. Its pathway is porphyrin-containing compound metabolism; siroheme biosynthesis; sirohydrochlorin from precorrin-2: step 1/1. In terms of biological role, multifunctional enzyme that catalyzes the SAM-dependent methylations of uroporphyrinogen III at position C-2 and C-7 to form precorrin-2 via precorrin-1. Then it catalyzes the NAD-dependent ring dehydrogenation of precorrin-2 to yield sirohydrochlorin. Finally, it catalyzes the ferrochelation of sirohydrochlorin to yield siroheme. The chain is Siroheme synthase 2 from Yersinia pseudotuberculosis serotype O:1b (strain IP 31758).